A 590-amino-acid chain; its full sequence is Beta-(1--&gt;2)glucan export ATP-binding/permease protein NdvA (590 aa).

Residues 21–301 (VALICGANVA…MSAFANQISE (281 aa)) form the ABC transmembrane type-1 domain. The next 6 membrane-spanning stretches (helical) occupy residues 22–42 (ALICGANVALAAIAILEPIMF), 55–75 (VFSTLAVWAGLGAFNVIAFVL), 136–156 (QHLSTAVALVLLVPTALSMDV), 158–178 (MSMVLLGLGVLYVGIGRLVMK), 248–268 (LSSTISMMVVLLIGAYLVTHG), and 275–295 (VIAFTGFATLLISRLDQMSAF). Residues 335–569 (VRFEDVGFEF…NGRFASLLRA (235 aa)) enclose the ABC transporter domain. 368–375 (GPTGAGKT) lines the ATP pocket.

The protein belongs to the ABC transporter superfamily. Beta-(1--&gt;2)glucan exporter (TC 3.A.1.108.1) family. As to quaternary structure, homodimer.

Its subcellular location is the cell inner membrane. It carries out the reaction [(1-&gt;2)-beta-D-glucosyl](n)(in) + ATP + H2O = [(1-&gt;2)-beta-D-glucosyl](n)(out) + ADP + phosphate + H(+). Its function is as follows. Involved in beta-(1--&gt;2)glucan export. Transmembrane domains (TMD) form a pore in the inner membrane and the ATP-binding domain (NBD) is responsible for energy generation. This chain is Beta-(1--&gt;2)glucan export ATP-binding/permease protein NdvA, found in Mesorhizobium japonicum (strain LMG 29417 / CECT 9101 / MAFF 303099) (Mesorhizobium loti (strain MAFF 303099)).